A 270-amino-acid polypeptide reads, in one-letter code: tRNA pseudouridine synthase A (270 aa).

The active-site Nucleophile is Asp51. Tyr109 contributes to the substrate binding site.

The protein belongs to the tRNA pseudouridine synthase TruA family. Homodimer.

The enzyme catalyses uridine(38/39/40) in tRNA = pseudouridine(38/39/40) in tRNA. In terms of biological role, formation of pseudouridine at positions 38, 39 and 40 in the anticodon stem and loop of transfer RNAs. The chain is tRNA pseudouridine synthase A from Burkholderia lata (strain ATCC 17760 / DSM 23089 / LMG 22485 / NCIMB 9086 / R18194 / 383).